Here is a 566-residue protein sequence, read N- to C-terminus: Solute carrier family 22 member 16 (566 aa).

The chain crosses the membrane as a helical span at residues 20–40 (FASAFQTISCGIHYLASVFIA). N-linked (GlcNAc...) asparagine glycans are attached at residues N52, N60, and N112. 5 helical membrane passes run 149–169 (LIQP…GDIA), 176–196 (PIIW…AFTF), 201–221 (FVIV…VVFV), 237–257 (MHVH…GFLV), and 261–281 (WIYQ…CWML). N-linked (GlcNAc...) asparagine glycosylation is present at N344. Transmembrane regions (helical) follow at residues 351–371 (TITV…FALN), 381–401 (LNLF…CLGM), 408–428 (NTLA…MLIP), 436–456 (IAMS…IYLY), 468–488 (LAVG…PFCV), and 493–513 (VWIF…GILT).

This sequence belongs to the major facilitator (TC 2.A.1) superfamily. Organic cation transporter (TC 2.A.1.19) family.

It localises to the membrane. Its function is as follows. High affinity carnitine transporter. This is Solute carrier family 22 member 16 (slc22a16) from Xenopus laevis (African clawed frog).